The chain runs to 208 residues: Guanylate kinase (208 aa).

The region spanning 4 to 182 (GQLYIISAPS…ALEELKSVFR (179 aa)) is the Guanylate kinase-like domain. Residue 11–18 (APSGAGKT) coordinates ATP.

This sequence belongs to the guanylate kinase family.

Its subcellular location is the cytoplasm. It catalyses the reaction GMP + ATP = GDP + ADP. Functionally, essential for recycling GMP and indirectly, cGMP. The sequence is that of Guanylate kinase from Hahella chejuensis (strain KCTC 2396).